The primary structure comprises 360 residues: MARRPRNSRAWRFVLSGVRRDQDGRSPALHAEEEAWGYDSDGQHSNSDSDTDLLTLPPSIPSAVPVTGESYCDCDSQNDPYCSSLHPFRQIKSCQCGEEDNYFDWVWDDCSKSTATVLSCDDRKVSFHMEYSCGTAAIRGNKMLTEGQHFWEIKMTSPVYGTDMMVGIGTSDVNLDKYRHTFCSLLGKDAESWGLSYTGLLQHKGDKSNFSSRFGQGSIIGVHLDTWHGVLTFYKNRKRIGVAATQLRNKKLFPLVCSTAAKSSMKVIRSCCCRTSLQYLCCARLRQLLPGSVDSLEVLPLPPGLKQVLSNKLGWVLQMGSNRSSQHKGDGSATTSCGSYSDSSCTPGHDNCQRKRCRRI.

Positions aspartate 21–leucine 54 are disordered. The B30.2/SPRY domain maps to serine 84 to arginine 274. One can recognise an SOCS box domain in the interval serine 264–tryptophan 315. Residues asparagine 322 to aspartate 350 form a disordered region. Residues serine 332 to threonine 346 are compositionally biased toward polar residues.

It belongs to the SPSB family. In terms of assembly, substrate-recognition component of the ECS(SPSB3) complex, composed of spsb3, cul5, elob, elob and rnf7/rbx2.

It localises to the nucleus. It functions in the pathway protein modification; protein ubiquitination. Substrate-recognition component of a cullin-5-RING E3 ubiquitin-protein ligase complex (ECS complex, also named CRL5 complex), which mediates the ubiquitination and subsequent proteasomal degradation of target proteins. The polypeptide is SPRY domain-containing SOCS box protein 3 (spsb3) (Xenopus laevis (African clawed frog)).